Reading from the N-terminus, the 241-residue chain is tRNA (cytidine/uridine-2'-O-)-methyltransferase TrmJ (241 aa).

S-adenosyl-L-methionine contacts are provided by residues 79–81 (TSA), G114, I134, and 141–143 (GSL).

It belongs to the class IV-like SAM-binding methyltransferase superfamily. RNA methyltransferase TrmH family. As to quaternary structure, homodimer.

It localises to the cytoplasm. The enzyme catalyses cytidine(32) in tRNA + S-adenosyl-L-methionine = 2'-O-methylcytidine(32) in tRNA + S-adenosyl-L-homocysteine + H(+). The catalysed reaction is uridine(32) in tRNA + S-adenosyl-L-methionine = 2'-O-methyluridine(32) in tRNA + S-adenosyl-L-homocysteine + H(+). Functionally, catalyzes the formation of 2'O-methylated cytidine (Cm32) or 2'O-methylated uridine (Um32) at position 32 in tRNA. This chain is tRNA (cytidine/uridine-2'-O-)-methyltransferase TrmJ (trmJ), found in Photorhabdus laumondii subsp. laumondii (strain DSM 15139 / CIP 105565 / TT01) (Photorhabdus luminescens subsp. laumondii).